The following is a 417-amino-acid chain: RH-like protein (417 aa).

A run of 11 helical transmembrane segments spans residues 12–32, 44–64, 77–97, 125–145, 172–192, 203–223, 238–258, 265–285, 287–307, 331–351, and 358–378; these read CLPLWALTLEAALILLFFFFT, LVASYQVCQDLTVMAVLGLGF, VAFNLFLLALGVQWAILLDGF, ISMNAVLGKVNLAQLVVMELV, IHVFAAYFGLTVAWCLPKPLP, TSPSLFAMLGTLFLWMFWPTF, VFSTYYALAVSAVTAISVSSL, INMTYMPNAGLAGGVAVGASC, VIHSPWIAMVLGLVAGLISFG, TFGLPALLGEITYIVLMALRV, and MIGFQVLLSTGTLSLAMAMSI.

Belongs to the ammonium transporter (TC 2.A.49) family. Rh subfamily.

Its subcellular location is the membrane. Its function is as follows. May be part of an oligomeric complex which is likely to have a transport or channel function in the erythrocyte membrane. This Macaca fascicularis (Crab-eating macaque) protein is RH-like protein.